Reading from the N-terminus, the 197-residue chain is Penicillin-binding protein activator LpoB (197 aa).

Positions 1–17 (MIKRMSGIALAALLLSG) are cleaved as a signal peptide. Residue C18 is the site of N-palmitoyl cysteine attachment. C18 carries S-diacylglycerol cysteine lipidation. The tract at residues 23 to 57 (PRGETPSQPPAPTTPAKPSVVPTPTPPVVTPVPQP) is disordered. The span at 29-57 (SQPPAPTTPAKPSVVPTPTPPVVTPVPQP) shows a compositional bias: pro residues.

It belongs to the LpoB family. Interacts with PBP1b.

The protein resides in the cell outer membrane. In terms of biological role, regulator of peptidoglycan synthesis that is essential for the function of penicillin-binding protein 1B (PBP1b). This is Penicillin-binding protein activator LpoB from Edwardsiella piscicida.